We begin with the raw amino-acid sequence, 673 residues long: Ribonucleoprotein PTB-binding 2 (673 aa).

A compositionally biased stretch (gly residues) spans 1 to 17 (MAARGGGAGGAGSGSGP). Positions 1 to 34 (MAARGGGAGGAGSGSGPSAGTAGEAAEPALRPGE) are disordered. Residues 18–29 (SAGTAGEAAEPA) show a composition bias toward low complexity. 3 RRM domains span residues 58-129 (RKIL…LQPT), 131-209 (ALLC…WMDV), and 220-298 (KCLC…FCAP). Positions 481-549 (QLPAGQAGPG…KGTEVASKNQ (69 aa)) are disordered. Residues 499-512 (SASVSISEASFSGS) show a composition bias toward low complexity. The span at 529–549 (TGNQKTPQSQPKGTEVASKNQ) shows a compositional bias: polar residues.

As to quaternary structure, interacts with PTBP1 and RAVER1. Expressed throughout embryogenesis. Detected at low levels in adult lung, brain and kidney, but not in the other tissues tested.

It is found in the nucleus. The protein resides in the cytoplasm. Its function is as follows. May bind single-stranded nucleic acids. In Mus musculus (Mouse), this protein is Ribonucleoprotein PTB-binding 2 (Raver2).